A 522-amino-acid polypeptide reads, in one-letter code: Poly(A) polymerase (522 aa).

ATP-binding positions include 63-65 (YGS), 76-78 (DID), aspartate 130, lysine 193, tyrosine 202, and 211-212 (GI). The Mg(2+) site is built by aspartate 76, aspartate 78, and aspartate 130. The disordered stretch occupies residues 475-522 (QLKAKEENSIPNEEKKEQLKKEMKQEANTIVKNSSTDDDFMKRFTRKN). A compositionally biased stretch (basic and acidic residues) spans 476–499 (LKAKEENSIPNEEKKEQLKKEMKQ).

The protein belongs to the poly(A) polymerase family. The cofactor is Mg(2+). Mn(2+) is required as a cofactor.

It localises to the cytoplasm. The protein resides in the nucleus. The catalysed reaction is RNA(n) + ATP = RNA(n)-3'-adenine ribonucleotide + diphosphate. In terms of biological role, polymerase that creates the 3'-poly(A) tail of mRNA's. May acquire specificity through interaction with a cleavage and polyadenylation factor. The sequence is that of Poly(A) polymerase from Entamoeba histolytica (strain ATCC 30459 / HM-1:IMSS / ABRM).